The following is a 427-amino-acid chain: Phosphoribosylamine--glycine ligase (427 aa).

The 205-residue stretch at 109-313 folds into the ATP-grasp domain; the sequence is RNLMAEYKIE…LAEVVTGITE (205 aa). ATP is bound at residue 136–191; it reads VRDHDGDLAVKPIGLTGGKGVRIMGEQVDRAGAIEYIREINGGVVLEERLTGEEFT. 3 residues coordinate Mg(2+): glutamine 271, glutamate 283, and asparagine 285. Mn(2+) is bound by residues glutamine 271, glutamate 283, and asparagine 285.

It belongs to the GARS family. Mg(2+) is required as a cofactor. It depends on Mn(2+) as a cofactor.

It carries out the reaction 5-phospho-beta-D-ribosylamine + glycine + ATP = N(1)-(5-phospho-beta-D-ribosyl)glycinamide + ADP + phosphate + H(+). Its pathway is purine metabolism; IMP biosynthesis via de novo pathway; N(1)-(5-phospho-D-ribosyl)glycinamide from 5-phospho-alpha-D-ribose 1-diphosphate: step 2/2. This is Phosphoribosylamine--glycine ligase from Methanoregula boonei (strain DSM 21154 / JCM 14090 / 6A8).